The following is a 64-amino-acid chain: Small ribosomal subunit protein eS17 (64 aa).

Belongs to the eukaryotic ribosomal protein eS17 family.

This Natronomonas pharaonis (strain ATCC 35678 / DSM 2160 / CIP 103997 / JCM 8858 / NBRC 14720 / NCIMB 2260 / Gabara) (Halobacterium pharaonis) protein is Small ribosomal subunit protein eS17.